A 416-amino-acid polypeptide reads, in one-letter code: MSAEIICVGTELLLGDILNSNSQFLAKELARLGIPHYYQTVVGDNPSRLKQVIEIASNRASILIFTGGLGPTPDDLTTETIADFFNTPLVERPEIIEDMSRKFAARGRTMTDNNRKQALLPQGADILPNPLGTAPGLLWQPRPNLTLMTFPGVPSEMKRMWQETAIPYLKNQGWGKEIIFSRMLRFRGIGESALAAKVSQFFDLTNPTVAPYASLGEVRLRVSAKTRSEQEAIALIDPVAQELQKIAGLDYYGSDDETLASVVGSVLRQKGETVSVAESCTAGGLGSVLTSVAGSSDYFRGGIIAYDNSVKVDLLGVNSADLEQYGAVSDIVAQQMALGVKQRLGTDWGVSITGVAGPGGGTDTKPVGLVYVGLADSQGKVESFECRFGTERDREMVRSLSAYTALDHLRRKLLVR.

It belongs to the CinA family.

The chain is CinA-like protein from Rippkaea orientalis (strain PCC 8801 / RF-1) (Cyanothece sp. (strain PCC 8801)).